Reading from the N-terminus, the 93-residue chain is Small ribosomal subunit protein uS19 (93 aa).

The protein belongs to the universal ribosomal protein uS19 family.

Functionally, protein S19 forms a complex with S13 that binds strongly to the 16S ribosomal RNA. This is Small ribosomal subunit protein uS19 from Helicobacter acinonychis (strain Sheeba).